We begin with the raw amino-acid sequence, 254 residues long: Capsid protein (254 aa).

Residues 1–12 (MRKYTRNTYTMS) are compositionally biased toward polar residues. A disordered region spans residues 1-38 (MRKYTRNTYTMSQKRKVNPQSAWPKKRRTSTTSRKYQW). A Bipartite nuclear localization signal motif is present at residues 10 to 35 (TMSQKRKVNPQSAWPKKRRTSTTSRK).

Belongs to the geminiviridae capsid protein family. Homomultimer. Binds to single-stranded and double-stranded viral DNA. Interacts (via nuclear localization signal) with host importin alpha-1a.

It localises to the virion. It is found in the host nucleus. Encapsidates the viral genome into characteristic twinned ('geminate') particles. Binds the genomic viral ssDNA and shuttles it into and out of the cell nucleus. Plays a role in protection of the genome from degradation, virus acquisition and transmission by insect vectors, infectivity, and systemic movement. The CP of monopartite geminiviruses is absolutely essential for virus movement. The protein is Capsid protein of Beet curly top virus (strain California/Logan) (BCTV).